Here is a 152-residue protein sequence, read N- to C-terminus: Clitocypin-4/-3 (152 aa).

This sequence belongs to the protease inhibitor I48 family. As to quaternary structure, homodimer.

Its function is as follows. Binds and inhibits cysteine proteinases. Inhibits most strongly papain and cathepsin L, more weakly bromelain and cathepsin B while it is completely ineffective against cathepsin H. This Clitocybe nebularis (Clouded agaric) protein is Clitocypin-4/-3 (clt4).